The sequence spans 721 residues: Glucans biosynthesis glucosyltransferase H (721 aa).

6 helical membrane-spanning segments follow: residues 53-75 (VLIM…QVLQ), 85-107 (VVLV…ALAG), 404-426 (GIGA…LISL), 456-478 (WVFA…LVLI), 490-512 (LRTF…VMMV), and 567-589 (WPLL…VALL).

This sequence belongs to the glycosyltransferase 2 family. OpgH subfamily.

The protein localises to the cell inner membrane. The protein operates within glycan metabolism; osmoregulated periplasmic glucan (OPG) biosynthesis. Involved in the biosynthesis of osmoregulated periplasmic glucans (OPGs). The protein is Glucans biosynthesis glucosyltransferase H of Rhodopseudomonas palustris (strain ATCC BAA-98 / CGA009).